Consider the following 380-residue polypeptide: 5-amino-6-(D-ribitylamino)uracil--L-tyrosine 4-hydroxyphenyl transferase (380 aa).

In terms of domain architecture, Radical SAM core spans 56–303; that stretch reads VTYIINRNIN…GAVARIYLGN (248 aa). Positions 70, 74, and 77 each coordinate [4Fe-4S] cluster.

It belongs to the radical SAM superfamily. CofH family. Consists of two subunits, CofG and CofH. [4Fe-4S] cluster serves as cofactor.

It carries out the reaction 5-amino-6-(D-ribitylamino)uracil + L-tyrosine + S-adenosyl-L-methionine = 5-amino-5-(4-hydroxybenzyl)-6-(D-ribitylimino)-5,6-dihydrouracil + 2-iminoacetate + 5'-deoxyadenosine + L-methionine + H(+). Its pathway is cofactor biosynthesis; coenzyme F0 biosynthesis. Functionally, catalyzes the radical-mediated synthesis of 5-amino-5-(4-hydroxybenzyl)-6-(D-ribitylimino)-5,6-dihydrouracil from 5-amino-6-(D-ribitylamino)uracil and L-tyrosine. The sequence is that of 5-amino-6-(D-ribitylamino)uracil--L-tyrosine 4-hydroxyphenyl transferase from Nostoc punctiforme (strain ATCC 29133 / PCC 73102).